Here is a 188-residue protein sequence, read N- to C-terminus: Peptidyl-tRNA hydrolase (188 aa).

Tyr14 contacts tRNA. The Proton acceptor role is filled by His19. TRNA is bound by residues Tyr64, Asn66, and Asn112.

Belongs to the PTH family. Monomer.

The protein resides in the cytoplasm. The catalysed reaction is an N-acyl-L-alpha-aminoacyl-tRNA + H2O = an N-acyl-L-amino acid + a tRNA + H(+). Hydrolyzes ribosome-free peptidyl-tRNAs (with 1 or more amino acids incorporated), which drop off the ribosome during protein synthesis, or as a result of ribosome stalling. Functionally, catalyzes the release of premature peptidyl moieties from peptidyl-tRNA molecules trapped in stalled 50S ribosomal subunits, and thus maintains levels of free tRNAs and 50S ribosomes. Releases Ala-tailed nascent peptides from stalled 50S ribosomal subunits. Non-templated Ala tailing occurs as part of the ribosome quality control (RQC) pathway. In the absence of Ala tails significantly less peptide release occurs. The Ala tail facilitates the interaction of Pth with the nascent peptide-tRNA ester bond as well as promoting nascent chain degradation; 3 Ala residues suffice to stimulate peptide release from stalled 50S ribosomal subunits. Complements a temperature-sensitive pth mutation in E.coli. In Bacillus subtilis (strain 168), this protein is Peptidyl-tRNA hydrolase.